A 154-amino-acid chain; its full sequence is 3-hydroxyacyl-[acyl-carrier-protein] dehydratase FabZ (154 aa).

The active site involves H60.

It belongs to the thioester dehydratase family. FabZ subfamily.

The protein localises to the cytoplasm. It carries out the reaction a (3R)-hydroxyacyl-[ACP] = a (2E)-enoyl-[ACP] + H2O. Involved in unsaturated fatty acids biosynthesis. Catalyzes the dehydration of short chain beta-hydroxyacyl-ACPs and long chain saturated and unsaturated beta-hydroxyacyl-ACPs. The polypeptide is 3-hydroxyacyl-[acyl-carrier-protein] dehydratase FabZ (Actinobacillus pleuropneumoniae serotype 5b (strain L20)).